The sequence spans 341 residues: MKSLAKLKAEPGIWLTRTEKPKLGHNDLLIKIKKTAICGTDIHIYNWDEWAQKTVPTPMVVGHEYAGEVVGIGQEVKGFTLGDRVSGEGHITCGHCRNCRGGRTHLCRNTVGVGVNRAGSFAEYLVIPAYNAFKLPDEISDDLASIFDPFGNAVHTALSFDLVGEDVLITGAGPIGIMAAAVAKHVGARHVVITDINEYRLDLARKMGATRAVDVSKESLKDVMTDLGMTEGFDVGMEMSGVPMAFTSMLESMNNGGKIAMLGIPGSDMAIDWSQVIFKGLTIKGIYGREMFETWYKMASLIQSGLDLTPIITHHYNIDDFQQGFDMMRSGQSGKVILDWT.

C38 contacts Zn(2+). Catalysis depends on charge relay system residues T40 and H43. 6 residues coordinate Zn(2+): H63, E64, C93, C96, C99, and C107. Residues I175, D195, R200, 262-264 (LGI), and 286-287 (IY) contribute to the NAD(+) site.

This sequence belongs to the zinc-containing alcohol dehydrogenase family. As to quaternary structure, homotetramer. Requires Zn(2+) as cofactor.

It is found in the cytoplasm. It carries out the reaction L-threonine + NAD(+) = (2S)-2-amino-3-oxobutanoate + NADH + H(+). Its pathway is amino-acid degradation; L-threonine degradation via oxydo-reductase pathway; glycine from L-threonine: step 1/2. Catalyzes the NAD(+)-dependent oxidation of L-threonine to 2-amino-3-ketobutyrate. The chain is L-threonine 3-dehydrogenase from Colwellia psychrerythraea (strain 34H / ATCC BAA-681) (Vibrio psychroerythus).